The sequence spans 958 residues: Glycine dehydrogenase (decarboxylating) 2 (958 aa).

The residue at position 707 (Lys707) is an N6-(pyridoxal phosphate)lysine.

The protein belongs to the GcvP family. As to quaternary structure, the glycine cleavage system is composed of four proteins: P, T, L and H. The cofactor is pyridoxal 5'-phosphate.

It carries out the reaction N(6)-[(R)-lipoyl]-L-lysyl-[glycine-cleavage complex H protein] + glycine + H(+) = N(6)-[(R)-S(8)-aminomethyldihydrolipoyl]-L-lysyl-[glycine-cleavage complex H protein] + CO2. In terms of biological role, the glycine cleavage system catalyzes the degradation of glycine. The P protein binds the alpha-amino group of glycine through its pyridoxal phosphate cofactor; CO(2) is released and the remaining methylamine moiety is then transferred to the lipoamide cofactor of the H protein. The sequence is that of Glycine dehydrogenase (decarboxylating) 2 (gcvP2) from Pseudomonas aeruginosa (strain ATCC 15692 / DSM 22644 / CIP 104116 / JCM 14847 / LMG 12228 / 1C / PRS 101 / PAO1).